Consider the following 127-residue polypeptide: Snaclec macrovipecetin subunit beta (127 aa).

3 disulfides stabilise this stretch: Cys-4–Cys-15, Cys-32–Cys-121, and Cys-98–Cys-113. Residues 11 to 122 (YEGHCYKVFD…CSRTYKFVCK (112 aa)) enclose the C-type lectin domain.

In terms of assembly, heterodimer of subunits alpha and beta; disulfide-linked. Expressed by the venom gland.

The protein localises to the secreted. Its function is as follows. Interferes with one step of hemostasis (modulation of platelet aggregation, or coagulation cascade, for example). The polypeptide is Snaclec macrovipecetin subunit beta (Macrovipera lebetinus (Levantine viper)).